The sequence spans 369 residues: Endophilin-A (369 aa).

The 231-residue stretch at 18-248 (TEKMGGAEGT…LQEKRSEAES (231 aa)) folds into the BAR domain. A coiled-coil region spans residues 227–247 (QCADVLRGLQETLQEKRSEAE). A compositionally biased stretch (low complexity) spans 275-294 (GTPSHISSSASPLPSPMRSP). The disordered stretch occupies residues 275 to 296 (GTPSHISSSASPLPSPMRSPAK). The 60-residue stretch at 305-364 (QQQPCCQALYDFDPENPGELGFKENDIITLLNRVDDNWYEGAVNGRTGYFPQSYVQVQVP) folds into the SH3 domain.

The protein belongs to the endophilin family.

It localises to the cytoplasm. The protein localises to the membrane. Functionally, required presynaptically at the neuromuscular junction. Implicated in synaptic vesicle endocytosis. In Drosophila pseudoobscura pseudoobscura (Fruit fly), this protein is Endophilin-A.